The primary structure comprises 29 residues: Sarcolamban B (29 aa).

A helical transmembrane segment spans residues 7-27 (LFTTFLILAFLLFLLYAFYEA).

Interacts with SERCA. Strongly expressed in embryonic and larval somatic muscles and postembryonic heart.

The protein resides in the sarcoplasmic reticulum membrane. Functionally, plays an essential role in the regulation of calcium transport at the sarcoplasmic reticulum (SR), which is secondarily required for regular muscle contraction. The polypeptide is Sarcolamban B (Drosophila melanogaster (Fruit fly)).